The primary structure comprises 122 residues: Proximal tubules-expressed gene protein (122 aa).

The chain crosses the membrane as a helical span at residues 33–53 (WLTGLIAMTVFLFLVLVVYVA).

Belongs to the PDZK1-interacting protein 1/SMIM24 family. Expressed in prospective pronephric mesoderm at the late gastrula stage. After neurulation, expressed in the intermediate mesoderm, eye placode and blood islands. Expression becomes restricted to the pronephric proximal tubule during embryogenesis, but is absent from the connecting tubules.

The protein resides in the membrane. Essential for pronephric tubule development, acting upstream of pax8 and lhx1/lim1 and downstream of retinoic acid signaling to induce pronephric mesoderm to form pronephric tubule-specific cells. This chain is Proximal tubules-expressed gene protein (pteg), found in Xenopus laevis (African clawed frog).